The chain runs to 326 residues: Thioredoxin reductase (326 aa).

Residue 55–62 (EGPEPGGQ) participates in FAD binding. A disulfide bridge links cysteine 156 with cysteine 159. 298–307 (DVSNKLYAQA) contributes to the FAD binding site.

The protein belongs to the class-II pyridine nucleotide-disulfide oxidoreductase family. As to quaternary structure, homodimer. It depends on FAD as a cofactor.

The protein localises to the cytoplasm. It carries out the reaction [thioredoxin]-dithiol + NADP(+) = [thioredoxin]-disulfide + NADPH + H(+). This Borreliella burgdorferi (strain ATCC 35210 / DSM 4680 / CIP 102532 / B31) (Borrelia burgdorferi) protein is Thioredoxin reductase (trxB).